Consider the following 47-residue polypeptide: IIECFFSCEIEKDGKSKEGKPCKPKGDKDKDKKCGGWRCKIKMCIKI.

Disulfide bonds link C4/C34, C8/C39, and C22/C44.

Post-translationally, contains 3 disulfide bonds. Expressed by the venom gland.

It localises to the secreted. Its function is as follows. Is toxic to insects. Reduces amplitude and frequency of spontaneous firing and inhibits voltage-gated sodium current (Nav) in the dorsal unpaired median (DUM) neurons of P.americana. The chain is Mu-theraphotoxin-An1a from Acanthoscurria natalensis (Tarantula spider).